We begin with the raw amino-acid sequence, 597 residues long: Aspartate--tRNA(Asp/Asn) ligase (597 aa).

L-aspartate is bound at residue glutamate 172. Positions 196 to 199 (QLFK) are aspartate. Arginine 218 lines the L-aspartate pocket. ATP is bound by residues 218 to 220 (RDE) and glutamine 227. Histidine 454 serves as a coordination point for L-aspartate. ATP is bound at residue glutamate 488. Arginine 495 contributes to the L-aspartate binding site. 540-543 (GLDR) contributes to the ATP binding site.

This sequence belongs to the class-II aminoacyl-tRNA synthetase family. Type 1 subfamily. Homodimer.

Its subcellular location is the cytoplasm. The catalysed reaction is tRNA(Asx) + L-aspartate + ATP = L-aspartyl-tRNA(Asx) + AMP + diphosphate. Aspartyl-tRNA synthetase with relaxed tRNA specificity since it is able to aspartylate not only its cognate tRNA(Asp) but also tRNA(Asn). Reaction proceeds in two steps: L-aspartate is first activated by ATP to form Asp-AMP and then transferred to the acceptor end of tRNA(Asp/Asn). The sequence is that of Aspartate--tRNA(Asp/Asn) ligase from Chromobacterium violaceum (strain ATCC 12472 / DSM 30191 / JCM 1249 / CCUG 213 / NBRC 12614 / NCIMB 9131 / NCTC 9757 / MK).